Consider the following 210-residue polypeptide: Proteasome subunit beta 2 (210 aa).

Positions 1–12 (MSNNVEEKILHG) are cleaved as a propeptide — removed in mature form; by autocatalysis. Residue Thr-13 is the Nucleophile of the active site.

The protein belongs to the peptidase T1B family. In terms of assembly, the 20S proteasome core is composed of 14 alpha and 14 beta subunits that assemble into four stacked heptameric rings, resulting in a barrel-shaped structure. The two inner rings, each composed of seven catalytic beta subunits, are sandwiched by two outer rings, each composed of seven alpha subunits. The catalytic chamber with the active sites is on the inside of the barrel. Has a gated structure, the ends of the cylinder being occluded by the N-termini of the alpha-subunits. Is capped at one or both ends by the proteasome regulatory ATPase, PAN.

Its subcellular location is the cytoplasm. The catalysed reaction is Cleavage of peptide bonds with very broad specificity.. With respect to regulation, the formation of the proteasomal ATPase PAN-20S proteasome complex, via the docking of the C-termini of PAN into the intersubunit pockets in the alpha-rings, triggers opening of the gate for substrate entry. Interconversion between the open-gate and close-gate conformations leads to a dynamic regulation of the 20S proteasome proteolysis activity. Functionally, component of the proteasome core, a large protease complex with broad specificity involved in protein degradation. In Cenarchaeum symbiosum (strain A), this protein is Proteasome subunit beta 2.